The sequence spans 779 residues: uncharacterized protein (779 aa).

2 positions are modified to phosphoserine: serine 97 and serine 120. Over residues 125-135 (EIDGEDEKKSV) the composition is skewed to basic and acidic residues. The segment at 125–174 (EIDGEDEKKSVGQESITGSAKRKDRRSKTNGSKRQKAEANREPPSDISLS) is disordered. Basic residues predominate over residues 144-158 (AKRKDRRSKTNGSKR). Positions 159-168 (QKAEANREPP) are enriched in basic and acidic residues. ATP-binding positions include 215–222 (GPPGCGKT) and 533–540 (GPPGCGKT). Positions 759-779 (DRQKYQRLAKRWSSASTNDAD) are disordered.

Belongs to the AAA ATPase family.

The protein localises to the nucleus. This is an uncharacterized protein from Schizosaccharomyces pombe (strain 972 / ATCC 24843) (Fission yeast).